The sequence spans 196 residues: Carnitine operon protein CaiE (196 aa).

Residues 173–196 (TQPLRQMEENRPRLQGTTDVTPKR) form a disordered region. Polar residues predominate over residues 187–196 (QGTTDVTPKR).

Belongs to the transferase hexapeptide repeat family.

Its pathway is amine and polyamine metabolism; carnitine metabolism. Overproduction of CaiE stimulates the activity of CaiB and CaiD. The polypeptide is Carnitine operon protein CaiE (Shigella dysenteriae serotype 1 (strain Sd197)).